We begin with the raw amino-acid sequence, 85 residues long: Photosystem I reaction center subunit PsaK (85 aa).

Transmembrane regions (helical) follow at residues 13–33 and 59–79; these read VSWT…AIAI and GAML…ILGL.

It belongs to the PsaG/PsaK family.

The protein localises to the cellular thylakoid membrane. The sequence is that of Photosystem I reaction center subunit PsaK from Synechococcus sp. (strain WH7803).